Here is a 709-residue protein sequence, read N- to C-terminus: MIRIHKDKYFDSIYDELLEQATQEKYMDEYLLEKFMKRYFNGKCSYCEIRMKELRLTIDFYRPINGSLNTMDGEFHPDHYKWLKNEDDNILSICVECKRAKSNRFPVDGDVASINADKNKLVKERRLLIHPCRDYPERHFDYDESGMVYYKSKKGEVTVDVLNLNRGMLVEMRAQVYSEFNNLCYLFSMEQSPYYLKQILQEVQLDSIFIGLKKFILSEWVILNEKIPFLQEFEPLLGKRLQEEEVRVLSVRNNKISQIDIDNNILYVDNDKRRKRVPARKINDYYDVSDENALEKYYGKQRFIEKIEIYNFKSIRNMKIDFTLSKSSNAPWLMLLGENGVGKSSILQAIALTLMGNEQRQKIIKKKPYEYLTKGFDEGSIKIKLSGMQEPISIYLNSNSFEFTGENHQRPRVLILGYGSTRLLPREEMLSNYKVTWARIENLFNPFIPLVNVREYLLSLNNEDFNNVKKAIESLFLDEVIIDRDQIYEEVYFGFANSYSKLEDLSDGYQTIIALATDIMMVMKNRWRNFDAEGIVLIDEIDAHLHPRWNIEIVSRLKNAFPKIQFIATTHNPLSLRGLIDGEVAVLLENEEREAYITQKLPSQKGFNVEGLLTSKFFGLYDTMPDLNELFDRYYLLLSNPSPNERQKEEIKNLQDKLSKYEKVGTTLREQKFYEAVDYYFAQYRKNNVELSDEEFNNIIEDAIKYFER.

Its function is as follows. Component of antiviral defense system Septu type II, composed of PtuA and PtuB. Expression of Septu type II in B.subtilis (strain BEST7003) confers resistance to phages SBSphiC and SpBeta. May be an ATPase. The polypeptide is Septu protein PtuA (Bacillus mycoides (strain KBAB4) (Bacillus weihenstephanensis)).